Consider the following 116-residue polypeptide: Ribosome-binding factor A (116 aa).

Belongs to the RbfA family. In terms of assembly, monomer. Binds 30S ribosomal subunits, but not 50S ribosomal subunits or 70S ribosomes.

Its subcellular location is the cytoplasm. In terms of biological role, one of several proteins that assist in the late maturation steps of the functional core of the 30S ribosomal subunit. Associates with free 30S ribosomal subunits (but not with 30S subunits that are part of 70S ribosomes or polysomes). Required for efficient processing of 16S rRNA. May interact with the 5'-terminal helix region of 16S rRNA. The chain is Ribosome-binding factor A from Streptococcus uberis (strain ATCC BAA-854 / 0140J).